We begin with the raw amino-acid sequence, 133 residues long: Small ribosomal subunit protein uS8 (133 aa).

The protein belongs to the universal ribosomal protein uS8 family. Part of the 30S ribosomal subunit. Contacts proteins S5 and S12.

In terms of biological role, one of the primary rRNA binding proteins, it binds directly to 16S rRNA central domain where it helps coordinate assembly of the platform of the 30S subunit. The polypeptide is Small ribosomal subunit protein uS8 (Salinibacter ruber (strain DSM 13855 / M31)).